The sequence spans 874 residues: Alanine--tRNA ligase (874 aa).

The Zn(2+) site is built by histidine 562, histidine 566, cysteine 664, and histidine 668.

Belongs to the class-II aminoacyl-tRNA synthetase family. Requires Zn(2+) as cofactor.

The protein localises to the cytoplasm. It catalyses the reaction tRNA(Ala) + L-alanine + ATP = L-alanyl-tRNA(Ala) + AMP + diphosphate. In terms of biological role, catalyzes the attachment of alanine to tRNA(Ala) in a two-step reaction: alanine is first activated by ATP to form Ala-AMP and then transferred to the acceptor end of tRNA(Ala). Also edits incorrectly charged Ser-tRNA(Ala) and Gly-tRNA(Ala) via its editing domain. This chain is Alanine--tRNA ligase, found in Neisseria gonorrhoeae (strain ATCC 700825 / FA 1090).